The following is a 361-amino-acid chain: Mitochondrial fission regulator 2 (361 aa).

Ser137 carries the phosphoserine modification. Disordered regions lie at residues 191–286 (FIDL…VPNM) and 298–322 (LRPV…EWDP). The segment covering 219–231 (VLPPPPPPPPPPQ) has biased composition (pro residues). The span at 232-244 (FSLQPPSSLPMQP) shows a compositional bias: low complexity. Residues 250–282 (HDIDSLATEMERQLSGVKKTDDSHHSKSQRLRD) are compositionally biased toward basic and acidic residues. Phosphoserine is present on residues Ser304 and Ser340.

This sequence belongs to the MTFR1 family. As to expression, expressed predominantly in testis (at protein level). Expressed to a lower extent in spleen.

It localises to the mitochondrion. Its function is as follows. May play a role in mitochondrial aerobic respiration essentially in the testis. Can also promote mitochondrial fission. This is Mitochondrial fission regulator 2 (Mtfr2) from Mus musculus (Mouse).